Here is a 791-residue protein sequence, read N- to C-terminus: Valine--tRNA ligase (791 aa).

Positions 40 to 50 (PTVSGKMHMGH) match the 'HIGH' region motif. Residues 521–525 (KMSKS) carry the 'KMSKS' region motif. Position 524 (Lys524) interacts with ATP.

This sequence belongs to the class-I aminoacyl-tRNA synthetase family. ValS type 2 subfamily.

The protein localises to the cytoplasm. It carries out the reaction tRNA(Val) + L-valine + ATP = L-valyl-tRNA(Val) + AMP + diphosphate. Functionally, catalyzes the attachment of valine to tRNA(Val). As ValRS can inadvertently accommodate and process structurally similar amino acids such as threonine, to avoid such errors, it has a 'posttransfer' editing activity that hydrolyzes mischarged Thr-tRNA(Val) in a tRNA-dependent manner. This is Valine--tRNA ligase from Thermoplasma acidophilum (strain ATCC 25905 / DSM 1728 / JCM 9062 / NBRC 15155 / AMRC-C165).